A 338-amino-acid polypeptide reads, in one-letter code: Probable tRNA pseudouridine synthase B (338 aa).

Catalysis depends on D78, which acts as the Nucleophile. Residues 245-320 (LPKIILRDSA…IAASPIRVLM (76 aa)) form the PUA domain.

Belongs to the pseudouridine synthase TruB family. Type 2 subfamily.

The catalysed reaction is uridine(55) in tRNA = pseudouridine(55) in tRNA. Its function is as follows. Could be responsible for synthesis of pseudouridine from uracil-55 in the psi GC loop of transfer RNAs. In Methanosarcina acetivorans (strain ATCC 35395 / DSM 2834 / JCM 12185 / C2A), this protein is Probable tRNA pseudouridine synthase B.